We begin with the raw amino-acid sequence, 438 residues long: Aspartate--tRNA(Asp/Asn) ligase (438 aa).

Position 176 (Glu-176) interacts with L-aspartate. The interval 198 to 201 (QLYK) is aspartate. Arg-220 lines the L-aspartate pocket. ATP-binding positions include 220–222 (RAE), 228–230 (RHL), and Glu-361. Residues Glu-361 and Ser-364 each coordinate Mg(2+). L-aspartate is bound by residues Ser-364 and Arg-368. Residue 409-412 (GADR) coordinates ATP.

It belongs to the class-II aminoacyl-tRNA synthetase family. Type 2 subfamily. Homodimer. Mg(2+) serves as cofactor.

The protein localises to the cytoplasm. The enzyme catalyses tRNA(Asx) + L-aspartate + ATP = L-aspartyl-tRNA(Asx) + AMP + diphosphate. Its function is as follows. Aspartyl-tRNA synthetase with relaxed tRNA specificity since it is able to aspartylate not only its cognate tRNA(Asp) but also tRNA(Asn). Reaction proceeds in two steps: L-aspartate is first activated by ATP to form Asp-AMP and then transferred to the acceptor end of tRNA(Asp/Asn). This is Aspartate--tRNA(Asp/Asn) ligase from Methanococcus maripaludis (strain C6 / ATCC BAA-1332).